The chain runs to 652 residues: 2-oxoglutarate carboxylase large subunit (652 aa).

The Pyruvate carboxyltransferase domain occupies 26 to 288 (ILITDLTPRD…DTGIDMKKLD (263 aa)). Substrate is bound by residues 34-38 (RDGQQ) and Arg105. Asp35 serves as a coordination point for a divalent metal cation. Residues Lys196, His227, and His229 each contribute to the a divalent metal cation site. At Lys196 the chain carries N6-carboxylysine. A substrate-binding site is contributed by Thr362. The Biotinyl-binding domain occupies 563-643 (AEEKGIPKAT…TPDDALLRIK (81 aa)). Lys609 carries the post-translational modification N6-biotinyllysine.

In terms of assembly, heterohexadecamer of 8 large subunits and 8 small subunits. The cofactor is Mg(2+). It depends on Mn(2+) as a cofactor. Requires Co(2+) as cofactor. In terms of processing, biotinylated.

It carries out the reaction hydrogencarbonate + 2-oxoglutarate + ATP = (S)-oxalosuccinate + ADP + phosphate + H(+). This Hydrogenobacter thermophilus (strain DSM 6534 / IAM 12695 / TK-6) protein is 2-oxoglutarate carboxylase large subunit.